Reading from the N-terminus, the 596-residue chain is Alkaline phosphatase 4 (596 aa).

Positions 1–20 are cleaved as a signal peptide; it reads MHCLVILGFLLGSLVAFSWA. Asp-93 contacts Mg(2+). Asp-93 contributes to the Zn(2+) binding site. Ser-144 acts as the Phosphoserine intermediate in catalysis. Mg(2+) is bound by residues His-202 and Thr-204. N-linked (GlcNAc...) asparagine glycosylation is found at Asn-262 and Asn-297. Glu-369 contacts Mg(2+). Zn(2+) is bound by residues Asp-374 and His-378. The N-linked (GlcNAc...) asparagine glycan is linked to Asn-401. Zn(2+) is bound by residues Asp-415 and His-416. 2 N-linked (GlcNAc...) asparagine glycosylation sites follow: Asn-464 and Asn-470. His-504 contacts Zn(2+). Cys-539 and Cys-550 are oxidised to a cystine. Basic and acidic residues predominate over residues 548-566; the sequence is DSCEDHKDGQKDRPLDKPN. Residues 548–570 are disordered; that stretch reads DSCEDHKDGQKDRPLDKPNPKRN. Asn-570 is lipidated: GPI-anchor amidated asparagine. The chain crosses the membrane as a helical span at residues 571-591; sequence GATVVGASLIPILTAATAAIL. Residues 571–596 constitute a propeptide, removed in mature form; the sequence is GATVVGASLIPILTAATAAILRGRGL.

The protein belongs to the alkaline phosphatase family. Homodimer. Mg(2+) is required as a cofactor. Zn(2+) serves as cofactor. Ellipsoid body ring neurons in the adult brain and in the lower Malpighian tubule and ureter.

Its subcellular location is the cell membrane. The catalysed reaction is a phosphate monoester + H2O = an alcohol + phosphate. In terms of biological role, important role in neural and renal epithelial function. This chain is Alkaline phosphatase 4, found in Drosophila melanogaster (Fruit fly).